The following is a 288-amino-acid chain: Capsid protein (288 aa).

An N-acetylalanine; by host modification is found at Ala-2.

Belongs to the high plain virus capsid family.

The protein localises to the virion. The protein is Capsid protein of High plains virus (isolate Kansas 2004).